Consider the following 274-residue polypeptide: Large ribosomal subunit protein uL2 (274 aa).

A disordered region spans residues 222–274 (GVAMNPVDHPHGGGEGRGKGHHPQSPWGQLAKGYKTRRGKKASDKLIVRRRNG). Over residues 229 to 239 (DHPHGGGEGRG) the composition is skewed to basic and acidic residues.

This sequence belongs to the universal ribosomal protein uL2 family. Part of the 50S ribosomal subunit. Forms a bridge to the 30S subunit in the 70S ribosome.

One of the primary rRNA binding proteins. Required for association of the 30S and 50S subunits to form the 70S ribosome, for tRNA binding and peptide bond formation. It has been suggested to have peptidyltransferase activity; this is somewhat controversial. Makes several contacts with the 16S rRNA in the 70S ribosome. This chain is Large ribosomal subunit protein uL2, found in Thermosipho africanus (strain TCF52B).